The primary structure comprises 308 residues: tRNA dimethylallyltransferase (308 aa).

Residue 8 to 15 (GATAVGKT) coordinates ATP. 10–15 (TAVGKT) lines the substrate pocket. Positions 33–36 (DSRQ) are interaction with substrate tRNA.

This sequence belongs to the IPP transferase family. Monomer. The cofactor is Mg(2+).

It carries out the reaction adenosine(37) in tRNA + dimethylallyl diphosphate = N(6)-dimethylallyladenosine(37) in tRNA + diphosphate. In terms of biological role, catalyzes the transfer of a dimethylallyl group onto the adenine at position 37 in tRNAs that read codons beginning with uridine, leading to the formation of N6-(dimethylallyl)adenosine (i(6)A). The polypeptide is tRNA dimethylallyltransferase (Kosmotoga olearia (strain ATCC BAA-1733 / DSM 21960 / TBF 19.5.1)).